Reading from the N-terminus, the 625-residue chain is tRNA uridine 5-carboxymethylaminomethyl modification enzyme MnmG (625 aa).

13 to 18 (GGGHAG) provides a ligand contact to FAD. 273–287 (GPRYCPSIEDKVVRF) is a binding site for NAD(+).

It belongs to the MnmG family. As to quaternary structure, homodimer. Heterotetramer of two MnmE and two MnmG subunits. It depends on FAD as a cofactor.

It is found in the cytoplasm. NAD-binding protein involved in the addition of a carboxymethylaminomethyl (cmnm) group at the wobble position (U34) of certain tRNAs, forming tRNA-cmnm(5)s(2)U34. The sequence is that of tRNA uridine 5-carboxymethylaminomethyl modification enzyme MnmG from Methylococcus capsulatus (strain ATCC 33009 / NCIMB 11132 / Bath).